A 506-amino-acid chain; its full sequence is UDP-N-acetylglucosamine--peptide N-acetylglucosaminyltransferase GtfA subunit (506 aa).

The N-terminus R-fold-1 stretch occupies residues 1 to 78 (MTVYNINLGI…FTDIKIAPTT (78 aa)). A UDP-binding site is contributed by 16–19 (GVEY). An extended beta-sheet domain region spans residues 79-195 (VTLDQVLAQV…LYRFPDRIFY (117 aa)). Residues 196–306 (SKAELVRYFL…QPQIATIPVG (111 aa)) form a C-terminus R-fold-1 region. H242 serves as a coordination point for N-acetyl-D-glucosamine. The tract at residues 307–506 (SLDQLTYPKE…LKEVRDDSAL (200 aa)) is R-fold-2. UDP is bound by residues R328, Y357, and 383 to 385 (GHA). Position 405–407 (405–407 (GFG)) interacts with N-acetyl-D-glucosamine. T409 is a UDP binding site.

Belongs to the glycosyltransferase group 1 family. Glycosyltransferase 4 subfamily. Forms a heterotetramer with 2 subunits each of GtfA and GtfB. Part of the accessory SecA2/SecY2 protein translocation apparatus required to export cell wall protein GspB.

It is found in the cytoplasm. The protein resides in the cell membrane. The catalysed reaction is L-seryl-[protein] + UDP-N-acetyl-alpha-D-glucosamine = 3-O-[N-acetyl-alpha-D-glucosaminyl]-L-seryl-[protein] + UDP + H(+). The protein operates within protein modification; protein glycosylation. Functionally, required for polymorphic O-glycosylation of GspB, a serine-rich repeat cell wall protein encoded upstream in the same operon. Catalyzes the first step in glycosylation by transferring N-acetylglucosamine from UDP-GlcNAc to serine residues in GspB. Part of the accessory SecA2/SecY2 system specifically required to export GspB. Upon coexpression in E.coli with GtfB glycosylates GspB constructs. Glycosylation probably occurs intracellularly. Requires GtfB for glycosylation activity, it has no activity alone. Does not use UDP-glucose as substrate. Has a fast, probably processive glycosylation phase followed by a slower, non-processive phase. The enzyme probably modifies its tertiary conformation by opening and closing its intersubunit interfaces to accomodate the increasingly glycosylated substrate; protein substrate recognition is provided by GtfB. This chain is UDP-N-acetylglucosamine--peptide N-acetylglucosaminyltransferase GtfA subunit, found in Streptococcus gordonii.